The chain runs to 356 residues: Protein trichome birefringence-like 41 (356 aa).

Residues 12-31 traverse the membrane as a helical; Signal-anchor for type II membrane protein segment; sequence SALVLSLLLLLLLPLLHEAA. The GDS motif motif lies at 107-109; that stretch reads GDS. Residues 333-347 carry the DCXHWCLPGXXDXWN motif motif; that stretch reads DCSHWCLSGVPDTWN.

The protein belongs to the PC-esterase family. TBL subfamily.

It localises to the membrane. Functionally, may act as a bridging protein that binds pectin and other cell wall polysaccharides. Probably involved in maintaining esterification of pectins. May be involved in the specific O-acetylation of cell wall polymers. This chain is Protein trichome birefringence-like 41 (TBL41), found in Arabidopsis thaliana (Mouse-ear cress).